We begin with the raw amino-acid sequence, 115 residues long: Phosphoribosyl-AMP cyclohydrolase (115 aa).

Asp-80 is a binding site for Mg(2+). Residue Cys-81 coordinates Zn(2+). Mg(2+)-binding residues include Asp-82 and Asp-84. Residues Cys-97 and Cys-104 each contribute to the Zn(2+) site.

Belongs to the PRA-CH family. In terms of assembly, homodimer. Requires Mg(2+) as cofactor. Zn(2+) serves as cofactor.

Its subcellular location is the cytoplasm. It catalyses the reaction 1-(5-phospho-beta-D-ribosyl)-5'-AMP + H2O = 1-(5-phospho-beta-D-ribosyl)-5-[(5-phospho-beta-D-ribosylamino)methylideneamino]imidazole-4-carboxamide. It functions in the pathway amino-acid biosynthesis; L-histidine biosynthesis; L-histidine from 5-phospho-alpha-D-ribose 1-diphosphate: step 3/9. Its function is as follows. Catalyzes the hydrolysis of the adenine ring of phosphoribosyl-AMP. The polypeptide is Phosphoribosyl-AMP cyclohydrolase (Mycolicibacterium smegmatis (strain ATCC 700084 / mc(2)155) (Mycobacterium smegmatis)).